Consider the following 207-residue polypeptide: dTTP/UTP pyrophosphatase (207 aa).

The active-site Proton acceptor is aspartate 79.

Belongs to the Maf family. YhdE subfamily. The cofactor is a divalent metal cation.

It is found in the cytoplasm. The catalysed reaction is dTTP + H2O = dTMP + diphosphate + H(+). It carries out the reaction UTP + H2O = UMP + diphosphate + H(+). Nucleoside triphosphate pyrophosphatase that hydrolyzes dTTP and UTP. May have a dual role in cell division arrest and in preventing the incorporation of modified nucleotides into cellular nucleic acids. The polypeptide is dTTP/UTP pyrophosphatase (Rhodopseudomonas palustris (strain ATCC BAA-98 / CGA009)).